We begin with the raw amino-acid sequence, 327 residues long: Phospho-N-acetylmuramoyl-pentapeptide-transferase (327 aa).

10 helical membrane passes run 3 to 23 (IALIAGIVTFILTIIGIPAFI), 51 to 71 (TMGGTVFLLTSVLASFVIGLF), 75 to 95 (LSNGLIMILFILVLYGVVGFL), 115 to 135 (LFLQLVGGVVFYFFYNQHGAG), 140 to 160 (IFTVPVQLGFLYVFFVLFWLI), 172 to 192 (IDGLASISVVISLVAYAVIAV), 197 to 217 (FDILIVIISMIGGLLGFFVFN), 223 to 243 (IFMGDVGSLALGGMLAAISIS), 248 to 268 (WTLLLIGIVYVFETTSVMMQV), and 306 to 326 (VDFFFWGIGIVGSLLTLAILY).

It belongs to the glycosyltransferase 4 family. MraY subfamily. The cofactor is Mg(2+).

The protein localises to the cell membrane. The enzyme catalyses UDP-N-acetyl-alpha-D-muramoyl-L-alanyl-gamma-D-glutamyl-L-lysyl-D-alanyl-D-alanine + di-trans,octa-cis-undecaprenyl phosphate = Mur2Ac(oyl-L-Ala-gamma-D-Glu-L-Lys-D-Ala-D-Ala)-di-trans,octa-cis-undecaprenyl diphosphate + UMP. It functions in the pathway cell wall biogenesis; peptidoglycan biosynthesis. In terms of biological role, catalyzes the initial step of the lipid cycle reactions in the biosynthesis of the cell wall peptidoglycan: transfers peptidoglycan precursor phospho-MurNAc-pentapeptide from UDP-MurNAc-pentapeptide onto the lipid carrier undecaprenyl phosphate, yielding undecaprenyl-pyrophosphoryl-MurNAc-pentapeptide, known as lipid I. This is Phospho-N-acetylmuramoyl-pentapeptide-transferase from Streptococcus sanguinis (strain SK36).